Here is a 347-residue protein sequence, read N- to C-terminus: NADH-ubiquinone oxidoreductase chain 2 (347 aa).

11 helical membrane passes run 2 to 22 (SPYV…MTLI), 25 to 45 (HWLT…PLMT), 56 to 76 (AIKY…SAIF), 96 to 116 (FMMT…FWVP), 122 to 142 (IPLL…ISIF), 149 to 169 (LNMS…GWGG), 178 to 197 (ILAY…IMIY), 202 to 219 (ILNL…FMVL), 241 to 261 (MIII…TGFM), 278 to 298 (LAMM…RIIY), and 326 to 346 (IPTL…FITL).

Belongs to the complex I subunit 2 family.

It is found in the mitochondrion inner membrane. It catalyses the reaction a ubiquinone + NADH + 5 H(+)(in) = a ubiquinol + NAD(+) + 4 H(+)(out). In terms of biological role, core subunit of the mitochondrial membrane respiratory chain NADH dehydrogenase (Complex I) that is believed to belong to the minimal assembly required for catalysis. Complex I functions in the transfer of electrons from NADH to the respiratory chain. The immediate electron acceptor for the enzyme is believed to be ubiquinone. The protein is NADH-ubiquinone oxidoreductase chain 2 (MT-ND2) of Didelphis virginiana (North American opossum).